A 182-amino-acid polypeptide reads, in one-letter code: Superoxide dismutase [Cu-Zn] (182 aa).

A signal peptide spans 1-19 (MFRTLTVVPLLALGLSLSA). The N-palmitoyl cysteine moiety is linked to residue C20. C20 is lipidated: S-diacylglycerol cysteine. 3 residues coordinate Cu cation: H69, H71, and H95. C76 and C175 are disulfide-bonded. The disordered stretch occupies residues 91-118 (AAGGHFDPGASHNHDGPHARNDQGHGGD). Residues H95, H104, H115, and D118 each contribute to the Zn(2+) site. Basic and acidic residues predominate over residues 102 to 115 (HNHDGPHARNDQGH).

Belongs to the Cu-Zn superoxide dismutase family. Cu cation serves as cofactor. Zn(2+) is required as a cofactor.

The protein resides in the cell membrane. The enzyme catalyses 2 superoxide + 2 H(+) = H2O2 + O2. In terms of biological role, destroys radicals which are normally produced within the cells and which are toxic to biological systems. The sequence is that of Superoxide dismutase [Cu-Zn] (sodC) from Deinococcus radiodurans (strain ATCC 13939 / DSM 20539 / JCM 16871 / CCUG 27074 / LMG 4051 / NBRC 15346 / NCIMB 9279 / VKM B-1422 / R1).